The following is a 214-amino-acid chain: Thiamine-phosphate synthase (214 aa).

4-amino-2-methyl-5-(diphosphooxymethyl)pyrimidine is bound by residues 38–42 (QLREK) and N70. Residues D71 and D90 each coordinate Mg(2+). 4-amino-2-methyl-5-(diphosphooxymethyl)pyrimidine-binding residues include S109 and K138. G165 lines the 2-[(2R,5Z)-2-carboxy-4-methylthiazol-5(2H)-ylidene]ethyl phosphate pocket.

It belongs to the thiamine-phosphate synthase family. Requires Mg(2+) as cofactor.

The enzyme catalyses 2-[(2R,5Z)-2-carboxy-4-methylthiazol-5(2H)-ylidene]ethyl phosphate + 4-amino-2-methyl-5-(diphosphooxymethyl)pyrimidine + 2 H(+) = thiamine phosphate + CO2 + diphosphate. It carries out the reaction 2-(2-carboxy-4-methylthiazol-5-yl)ethyl phosphate + 4-amino-2-methyl-5-(diphosphooxymethyl)pyrimidine + 2 H(+) = thiamine phosphate + CO2 + diphosphate. The catalysed reaction is 4-methyl-5-(2-phosphooxyethyl)-thiazole + 4-amino-2-methyl-5-(diphosphooxymethyl)pyrimidine + H(+) = thiamine phosphate + diphosphate. Its pathway is cofactor biosynthesis; thiamine diphosphate biosynthesis; thiamine phosphate from 4-amino-2-methyl-5-diphosphomethylpyrimidine and 4-methyl-5-(2-phosphoethyl)-thiazole: step 1/1. Functionally, condenses 4-methyl-5-(beta-hydroxyethyl)thiazole monophosphate (THZ-P) and 2-methyl-4-amino-5-hydroxymethyl pyrimidine pyrophosphate (HMP-PP) to form thiamine monophosphate (TMP). The polypeptide is Thiamine-phosphate synthase (Caldanaerobacter subterraneus subsp. tengcongensis (strain DSM 15242 / JCM 11007 / NBRC 100824 / MB4) (Thermoanaerobacter tengcongensis)).